The chain runs to 352 residues: Nicotinate-nucleotide--dimethylbenzimidazole phosphoribosyltransferase (352 aa).

The Proton acceptor role is filled by Glu-318.

It belongs to the CobT family.

It carries out the reaction 5,6-dimethylbenzimidazole + nicotinate beta-D-ribonucleotide = alpha-ribazole 5'-phosphate + nicotinate + H(+). Its pathway is nucleoside biosynthesis; alpha-ribazole biosynthesis; alpha-ribazole from 5,6-dimethylbenzimidazole: step 1/2. Catalyzes the synthesis of alpha-ribazole-5'-phosphate from nicotinate mononucleotide (NAMN) and 5,6-dimethylbenzimidazole (DMB). This is Nicotinate-nucleotide--dimethylbenzimidazole phosphoribosyltransferase from Geobacter sulfurreducens (strain ATCC 51573 / DSM 12127 / PCA).